We begin with the raw amino-acid sequence, 412 residues long: Putative membrane protein 337L (412 aa).

N-linked (GlcNAc...) asparagine; by host glycosylation is found at asparagine 171, asparagine 186, asparagine 247, and asparagine 271. A helical transmembrane segment spans residues 387–407 (VLITGIAVTGVAVLLFLLLMF).

Belongs to the IIV-6 337L family.

The protein resides in the virion membrane. This chain is Putative membrane protein 337L, found in Acheta domesticus (House cricket).